The sequence spans 428 residues: Anaerobic glycerol-3-phosphate dehydrogenase subunit B (428 aa).

The protein belongs to the anaerobic G-3-P dehydrogenase subunit B family. In terms of assembly, composed of a catalytic GlpA/B dimer and of membrane bound GlpC. It depends on FMN as a cofactor.

It carries out the reaction a quinone + sn-glycerol 3-phosphate = dihydroxyacetone phosphate + a quinol. Its pathway is polyol metabolism; glycerol degradation via glycerol kinase pathway; glycerone phosphate from sn-glycerol 3-phosphate (anaerobic route): step 1/1. Its function is as follows. Conversion of glycerol 3-phosphate to dihydroxyacetone. Uses fumarate or nitrate as electron acceptor. The polypeptide is Anaerobic glycerol-3-phosphate dehydrogenase subunit B (Pasteurella multocida (strain Pm70)).